Reading from the N-terminus, the 284-residue chain is Shikimate dehydrogenase (NADP(+)) (284 aa).

Residues 20-22 (SIS) and Ser-67 each bind shikimate. Lys-71 acts as the Proton acceptor in catalysis. Asp-83 is a binding site for NADP(+). Asn-92 and Asp-107 together coordinate shikimate. NADP(+)-binding positions include 129-133 (GAGGA) and Ile-227. Tyr-229 contributes to the shikimate binding site. Position 250 (Gly-250) interacts with NADP(+).

The protein belongs to the shikimate dehydrogenase family. In terms of assembly, homodimer.

The catalysed reaction is shikimate + NADP(+) = 3-dehydroshikimate + NADPH + H(+). It functions in the pathway metabolic intermediate biosynthesis; chorismate biosynthesis; chorismate from D-erythrose 4-phosphate and phosphoenolpyruvate: step 4/7. In terms of biological role, involved in the biosynthesis of the chorismate, which leads to the biosynthesis of aromatic amino acids. Catalyzes the reversible NADPH linked reduction of 3-dehydroshikimate (DHSA) to yield shikimate (SA). This Streptococcus pneumoniae (strain ATCC 700669 / Spain 23F-1) protein is Shikimate dehydrogenase (NADP(+)).